Consider the following 341-residue polypeptide: tRNA N6-adenosine threonylcarbamoyltransferase (341 aa).

Fe cation-binding residues include H115 and H119. Substrate-binding positions include 137-141, D170, G183, D187, and N276; that span reads IVSGG. Residue D304 coordinates Fe cation.

This sequence belongs to the KAE1 / TsaD family. Requires Fe(2+) as cofactor.

The protein localises to the cytoplasm. It catalyses the reaction L-threonylcarbamoyladenylate + adenosine(37) in tRNA = N(6)-L-threonylcarbamoyladenosine(37) in tRNA + AMP + H(+). In terms of biological role, required for the formation of a threonylcarbamoyl group on adenosine at position 37 (t(6)A37) in tRNAs that read codons beginning with adenine. Is involved in the transfer of the threonylcarbamoyl moiety of threonylcarbamoyl-AMP (TC-AMP) to the N6 group of A37, together with TsaE and TsaB. TsaD likely plays a direct catalytic role in this reaction. In Staphylococcus aureus (strain Mu3 / ATCC 700698), this protein is tRNA N6-adenosine threonylcarbamoyltransferase.